We begin with the raw amino-acid sequence, 584 residues long: Outer membrane transporter CdiB-2 (584 aa).

Residues 1 to 20 (MATRFAILPVTALITLTAQA) form the signal peptide. Positions 24 to 44 (PTPNDQAAAARANAEQNQQAQ) are enriched in low complexity. A disordered region spans residues 24–72 (PTPNDQAAAARANAEQNQQAQQRRDAQQRDATVQAPGVRSDVPRPEAYP). The POTRA domain occupies 98-171 (SKAQGASALP…GALKLALIPG (74 aa)).

It belongs to the TPS (TC 1.B.20) family.

The protein localises to the cell outer membrane. Functionally, potential outer membrane protein component of a toxin-immunity protein module, which functions as a cellular contact-dependent growth inhibition (CDI) system. CDI modules allow bacteria to communicate with and inhibit the growth of closely related neighboring bacteria in a contact-dependent fashion. This protein may be required for secretion and assembly of the CdiA toxin protein. In terms of biological role, expression of this cdiAIB locus in B.thailandensis confers protection against other bacteria carrying the locus; growth inhibition requires cellular contact. Its function is as follows. Probable member of a two partner secretion pathway (TPS) in which it mediates the secretion of CdiA2. This Burkholderia pseudomallei (strain 1026b) protein is Outer membrane transporter CdiB-2 (cdiB2).